Here is a 122-residue protein sequence, read N- to C-terminus: Fluoride-specific ion channel FluC (122 aa).

A run of 4 helical transmembrane segments spans residues 1 to 21 (MYAF…RHYL), 35 to 55 (WAIL…SAYL), 67 to 87 (FLLT…LNLI), and 98 to 118 (FLNL…GFWL). The Na(+) site is built by glycine 74 and threonine 77.

The protein belongs to the fluoride channel Fluc/FEX (TC 1.A.43) family.

It is found in the cell inner membrane. It catalyses the reaction fluoride(in) = fluoride(out). Its activity is regulated as follows. Na(+) is not transported, but it plays an essential structural role and its presence is essential for fluoride channel function. Its function is as follows. Fluoride-specific ion channel. Important for reducing fluoride concentration in the cell, thus reducing its toxicity. In Dichelobacter nodosus (strain VCS1703A), this protein is Fluoride-specific ion channel FluC.